The chain runs to 704 residues: Pentatricopeptide repeat-containing protein At1g56690, mitochondrial (704 aa).

The N-terminal 12 residues, 1–12, are a transit peptide targeting the mitochondrion; sequence MKRLKLILRRTY. 15 PPR repeats span residues 16-46, 47-81, 82-108, 109-143, 144-170, 171-205, 206-232, 233-267, 268-294, 295-329, 330-364, 365-395, 396-430, 431-465, and 467-497; these read TGVN…LQFK, AIGS…NVVS, WNGL…MPER, NVVS…NEVS, WTVM…MPVK, DVVA…NVVT, WTTM…MPEK, TEVS…PVIA, CNAM…MEDR, DNAT…GVRP, SFPS…QFDD, DVYV…FSSK, DIIM…GTMP, NKVT…FCVT, and TVEH…MTIK. Residues 502–577 are type E motif; it reads VWGALLGACK…FPGCSWIEVG (76 aa). Positions 578-609 are type E(+) motif; the sequence is KKVHMFTRGGIKNHPEQAMILMMLEKTDGLLR. A type DYW motif region spans residues 610–704; that stretch reads EAGYSPDCSH…NGECSCRDYW (95 aa).

This sequence belongs to the PPR family. PCMP-H subfamily.

The protein localises to the mitochondrion. This Arabidopsis thaliana (Mouse-ear cress) protein is Pentatricopeptide repeat-containing protein At1g56690, mitochondrial (PCMP-H69).